A 126-amino-acid chain; its full sequence is Fluoride-specific ion channel FluC (126 aa).

The next 4 membrane-spanning stretches (helical) occupy residues 5–25 (LHFL…WLLG), 35–55 (WGTL…LGLI), 68–88 (ALVT…AEVV), and 99–119 (AAGY…LGLA). Gly75 and Thr78 together coordinate Na(+).

The protein belongs to the fluoride channel Fluc/FEX (TC 1.A.43) family.

Its subcellular location is the cell inner membrane. It catalyses the reaction fluoride(in) = fluoride(out). Its activity is regulated as follows. Na(+) is not transported, but it plays an essential structural role and its presence is essential for fluoride channel function. Fluoride-specific ion channel. Important for reducing fluoride concentration in the cell, thus reducing its toxicity. This chain is Fluoride-specific ion channel FluC, found in Bordetella avium (strain 197N).